Here is a 65-residue protein sequence, read N- to C-terminus: Large ribosomal subunit protein bL35 (65 aa).

The segment at 1–22 is disordered; the sequence is MPKIKTVRGAAKRFKKTGKGGF. The segment covering 10-22 has biased composition (basic residues); it reads AAKRFKKTGKGGF.

It belongs to the bacterial ribosomal protein bL35 family.

In Escherichia coli O127:H6 (strain E2348/69 / EPEC), this protein is Large ribosomal subunit protein bL35.